The primary structure comprises 446 residues: Methionine aminopeptidase 2 (446 aa).

The tract at residues 1–91 (MAAQVTDALK…PPRVLLSNLF (91 aa)) is disordered. Acidic residues predominate over residues 36 to 48 (EAEDSDDEEEEPV). Residues 59 to 72 (KKKRKRKKKPKKKA) show a composition bias toward basic residues. His-199 is a substrate binding site. A divalent metal cation contacts are provided by Asp-219, Asp-230, and His-299. His-307 serves as a coordination point for substrate. Residues Glu-332 and Glu-427 each contribute to the a divalent metal cation site.

It belongs to the peptidase M24A family. Methionine aminopeptidase eukaryotic type 2 subfamily. The cofactor is Co(2+). It depends on Zn(2+) as a cofactor. Requires Mn(2+) as cofactor. Fe(2+) serves as cofactor.

The protein localises to the cytoplasm. The catalysed reaction is Release of N-terminal amino acids, preferentially methionine, from peptides and arylamides.. In terms of biological role, cotranslationally removes the N-terminal methionine from nascent proteins. The N-terminal methionine is often cleaved when the second residue in the primary sequence is small and uncharged (Met-Ala-, Cys, Gly, Pro, Ser, Thr, or Val). This Sclerotinia sclerotiorum (strain ATCC 18683 / 1980 / Ss-1) (White mold) protein is Methionine aminopeptidase 2.